Reading from the N-terminus, the 122-residue chain is Serum amyloid A-1 protein (122 aa).

Positions 1 to 18 (MKPFVAIIFCFLILGVDS) are cleaved as a signal peptide. The important for amyloid formation stretch occupies residues 19 to 45 (QRWFQFMKEAGQGTRDMWRAYTDMREA). The tract at residues 100–122 (ANEWGRSGKDPNFFRPPGLPSKY) is disordered.

This sequence belongs to the SAA family. In terms of assembly, homohexamer; dimer of trimers. Can form amyloid fibrils after partial proteolysis; the native, undenatured protein does not form amyloid fibrils (in vitro). Apolipoprotein of the HDL complex. Binds to heparin. As to expression, detected in liver, spleen and kidney.

The protein resides in the secreted. Functionally, major acute phase protein. The chain is Serum amyloid A-1 protein (SAA1) from Mesocricetus auratus (Golden hamster).